The following is a 989-amino-acid chain: Protease PrtH (989 aa).

2 consecutive repeats follow at residues 270–323 (TPTD…KCVN) and 528–581 (SPAS…VCVD). Positions 969–989 (PRDTPWRYGKRELPPSASGMR) are disordered.

Belongs to the peptidase C25 family.

The protein localises to the cytoplasmic vesicle. Functionally, cleaves human complement component C3. May enable P.gingivalis to evade complement-mediated killing during the immune response. Plays an important role in soft tissue infections and is a virulence factor. The chain is Protease PrtH (prtH) from Porphyromonas gingivalis (strain ATCC BAA-308 / W83).